The primary structure comprises 432 residues: UDP-glucosyltransferase B1 (432 aa).

The protein belongs to the UDP-glycosyltransferase family.

It catalyses the reaction (9Z)-17-hydroxyoctadec-9-enoate 17-O-beta-D-glucoside + UDP-alpha-D-glucose = (9Z)-17-hydroxyoctadec-9-enoate 17-O-sophoroside + UDP + H(+). Functionally, catalyzes the second glycosylation step of sophorolipid biosynthesis, the further glucosylation of the previoulsy formed glucolipid to give rise to an acidic sophorolipid. The chain is UDP-glucosyltransferase B1 from Starmerella bombicola (Yeast).